The primary structure comprises 654 residues: Hepatocyte growth factor activator serine proteases (654 aa).

Residues 1–33 (MGRWAWGPSLCPLPGMALLLLLLLLLVPHGAQP) form the signal peptide. A disordered region spans residues 34–100 (QAGGNLTEPP…SSSPGDPVLT (67 aa)). Positions 34-370 (QAGGNLTEPP…RLAACESLAR (337 aa)) are cleaved as a propeptide — removed in mature form. Asn-38 and Asn-46 each carry an N-linked (GlcNAc...) asparagine glycan. Low complexity predominate over residues 57 to 81 (PVTSVTPVTPATSAPEAQGPRGRGL). The region spanning 101-148 (VDGQPCRFPFRYGGRMLHACTSEGSAHRKWCATTHNYDRDRAWGYCVQ) is the Fibronectin type-II domain. 19 cysteine pairs are disulfide-bonded: Cys-106–Cys-131, Cys-120–Cys-146, Cys-162–Cys-173, Cys-167–Cys-184, Cys-186–Cys-195, Cys-200–Cys-228, Cys-226–Cys-235, Cys-243–Cys-254, Cys-248–Cys-265, Cys-267–Cys-276, Cys-284–Cys-365, Cys-305–Cys-347, Cys-336–Cys-360, Cys-393–Cys-520, Cys-431–Cys-447, Cys-439–Cys-509, Cys-534–Cys-603, Cys-566–Cys-582, and Cys-593–Cys-621. The EGF-like 1 domain maps to 158-196 (ALDSCASSPCLNGGSCSHTQDPGSYHCTCPMAFTGRNCD). A Fibronectin type-I domain is found at 198-238 (EKCFDETRYEHLEAGDRWARVSQGQVEQCECAGGQIRCEGT). The EGF-like 2 domain occupies 239–277 (RHTACLSSPCLNGGTCHLIVATGTTVCSCPPGHAGRLCN). One can recognise a Kringle domain in the interval 283–365 (RCFVGNGTEY…SWEYCRLAAC (83 aa)). A glycan (N-linked (GlcNAc...) asparagine) is linked at Asn-288. The Peptidase S1 domain occupies 407-645 (IIGGSSSLPG…YVDWIKDRIW (239 aa)). His-446 serves as the catalytic Charge relay system. Asn-467 and Asn-491 each carry an N-linked (GlcNAc...) asparagine glycan. Residue Asp-496 is the Charge relay system of the active site. Residue Asn-545 is glycosylated (N-linked (GlcNAc...) asparagine). Catalysis depends on Ser-597, which acts as the Charge relay system.

It belongs to the peptidase S1 family. Heterodimer of a short chain and a long chain linked by a disulfide bond. The active form of HGFAC presents in the serum is derived from the COOH-terminal region of the precursor by the cleavage of bonds between Arg-370 and Ile-371 and Arg-406 and Ile-407. Liver.

It is found in the secreted. In terms of biological role, serine protease that hydrolyzes the inactive zymogen hepatocyte growth factor (HGFsc) to an activated disulfide-linked heterodimer, then initiating hepatocyte growth factor receptor signaling pathway. The polypeptide is Hepatocyte growth factor activator serine proteases (HGFAC) (Canis lupus familiaris (Dog)).